The sequence spans 1414 residues: DNA-directed RNA polymerase subunit beta' (1414 aa).

Positions 70, 72, 85, and 88 each coordinate Zn(2+). Positions 460, 462, and 464 each coordinate Mg(2+). Residues cysteine 815, cysteine 889, cysteine 896, and cysteine 899 each contribute to the Zn(2+) site. The tract at residues glutamate 1395–serine 1414 is disordered.

The protein belongs to the RNA polymerase beta' chain family. The RNAP catalytic core consists of 2 alpha, 1 beta, 1 beta' and 1 omega subunit. When a sigma factor is associated with the core the holoenzyme is formed, which can initiate transcription. Mg(2+) is required as a cofactor. Requires Zn(2+) as cofactor.

It catalyses the reaction RNA(n) + a ribonucleoside 5'-triphosphate = RNA(n+1) + diphosphate. In terms of biological role, DNA-dependent RNA polymerase catalyzes the transcription of DNA into RNA using the four ribonucleoside triphosphates as substrates. This Herminiimonas arsenicoxydans protein is DNA-directed RNA polymerase subunit beta'.